Reading from the N-terminus, the 262-residue chain is Dimeric xanthone biosynthesis cluster protein R11 (262 aa).

The tract at residues 69 to 160 (IADLLFYTKT…PQLFKHLNDE (92 aa)) is hemerythrin-like.

It functions in the pathway secondary metabolite biosynthesis. In terms of biological role, part of the gene cluster that mediates the biosynthesis of the dimeric xanthones cryptosporioptides. The pathway begins with the synthesis of atrochrysone thioester by the polyketide synthase dmx-nrPKS. The atrochrysone carboxyl ACP thioesterase dmxR1 then breaks the thioester bond and releases the atrochrysone carboxylic acid from dmx-nrPKS. Atrochrysone carboxylic acid is decarboxylated by the decarboxylase dmxR15, and oxidized by the anthrone oxygenase dmxR16 to yield emodin. Emodin is then reduced to emodin hydroquinone by the oxidoreductase dmxR7. A-ring reduction by the short chain dehydrogenase dmxR18, dehydration by the scytalone dehydratase-like protein dmxR17 and probable spontaneous re-oxidation, results in overall deoxygenation to chrysophanol. Baeyer-Villiger oxidation by the Baeyer-Villiger monooxygenase (BVMO) dmxR6 then yields monodictylactone in equilibrium with monodictyphenone. In the case of the cryptosporioptides biosynthesis, monodictylactone is reduced at C-12 to an alcohol (by the short chain dehydrogenases dmxR12 or dmxR8) and hydroxylated at C-5 by dmxR9, yielding the electron-rich aromatic which could eliminate H(2)O to form the ortho-quinonemethide, followed by tautomerisation to paraquinone and complete the formal reduction to produce the 10-methylgroup. Conjugate addition of C-4a-OH to the resulting paraquinone by the monooxygenase dmxR10 then gives cyclohexadienone, which is then reduced at C-5 by the short chain dehydrogenase dmxR3 to give the dihydroxanthone. The 6,7-epoxide in the cryptosporioptides could be introduced by the cytochrome P450 monooxygenase dmxL3. The highly reducing PKS dmxL2 manufactures butyrate, which is further carboxylated by dmxL1 to form ethylmalonate. It is not yet clear whether the carboxylation occurs while the butyrate is attached to the ACP of dmxL2, but this unusual fungal metabolite could then be esterified to O-5 by the O-acetyltransferase dmxR13. Finally, dimerization performed by dmxR5 gives the observed dimers cryptosporioptides A, B and C as the final products of the pathway. The sequence is that of Dimeric xanthone biosynthesis cluster protein R11 from Cryptosporiopsis sp. (strain 8999).